A 254-amino-acid polypeptide reads, in one-letter code: Leucyl/phenylalanyl-tRNA--protein transferase (254 aa).

Belongs to the L/F-transferase family.

It localises to the cytoplasm. It catalyses the reaction N-terminal L-lysyl-[protein] + L-leucyl-tRNA(Leu) = N-terminal L-leucyl-L-lysyl-[protein] + tRNA(Leu) + H(+). It carries out the reaction N-terminal L-arginyl-[protein] + L-leucyl-tRNA(Leu) = N-terminal L-leucyl-L-arginyl-[protein] + tRNA(Leu) + H(+). The enzyme catalyses L-phenylalanyl-tRNA(Phe) + an N-terminal L-alpha-aminoacyl-[protein] = an N-terminal L-phenylalanyl-L-alpha-aminoacyl-[protein] + tRNA(Phe). Functions in the N-end rule pathway of protein degradation where it conjugates Leu, Phe and, less efficiently, Met from aminoacyl-tRNAs to the N-termini of proteins containing an N-terminal arginine or lysine. This Burkholderia multivorans (strain ATCC 17616 / 249) protein is Leucyl/phenylalanyl-tRNA--protein transferase.